A 314-amino-acid chain; its full sequence is Malate dehydrogenase (314 aa).

NAD(+) contacts are provided by residues 12–17 (GAGNIG) and Asp36. Substrate contacts are provided by Arg85 and Arg91. NAD(+) is bound by residues Asn98 and 121-123 (VTN). Substrate is bound by residues Asn123 and Arg154. Catalysis depends on His178, which acts as the Proton acceptor.

This sequence belongs to the LDH/MDH superfamily. MDH type 3 family.

The catalysed reaction is (S)-malate + NAD(+) = oxaloacetate + NADH + H(+). Catalyzes the reversible oxidation of malate to oxaloacetate. The polypeptide is Malate dehydrogenase (Wolbachia pipientis subsp. Culex pipiens (strain wPip)).